The primary structure comprises 119 residues: Flagellar transcriptional regulator FlhD (119 aa).

This sequence belongs to the FlhD family. Homodimer; disulfide-linked. Forms a heterohexamer composed of two FlhC and four FlhD subunits. Each FlhC binds a FlhD dimer, forming a heterotrimer, and a hexamer assembles by dimerization of two heterotrimers.

The protein resides in the cytoplasm. Functions in complex with FlhC as a master transcriptional regulator that regulates transcription of several flagellar and non-flagellar operons by binding to their promoter region. Activates expression of class 2 flagellar genes, including fliA, which is a flagellum-specific sigma factor that turns on the class 3 genes. Also regulates genes whose products function in a variety of physiological pathways. This chain is Flagellar transcriptional regulator FlhD, found in Cronobacter sakazakii (strain ATCC BAA-894) (Enterobacter sakazakii).